A 536-amino-acid polypeptide reads, in one-letter code: Lysosomal acid glucosylceramidase (536 aa).

The N-terminal stretch at 1–39 (MEFSSPSREECPKPSGRVSIMAGSLTGLLLLQAVSWASG) is a signal peptide. 2 disulfides stabilise this stretch: Cys-43/Cys-55 and Cys-57/Cys-62. Asn-58, Asn-98, and Asn-185 each carry an N-linked (GlcNAc...) asparagine glycan. Glu-274 functions as the Proton donor in the catalytic mechanism. An N-linked (GlcNAc...) asparagine glycan is attached at Asn-309. Catalysis depends on Glu-379, which acts as the Nucleophile. N-linked (GlcNAc...) asparagine glycosylation occurs at Asn-501.

This sequence belongs to the glycosyl hydrolase 30 family. Interacts with saposin-C. Interacts with SCARB2. Interacts with TCP1. Interacts with GRN; this interaction prevents aggregation of GBA1-SCARB2 complex via interaction with HSPA1A upon stress.

It is found in the lysosome membrane. It catalyses the reaction a beta-D-glucosyl-(1&lt;-&gt;1')-N-acylsphing-4-enine + H2O = an N-acylsphing-4-enine + D-glucose. It carries out the reaction a beta-D-galactosyl-(1&lt;-&gt;1')-N-acylsphing-4-enine + H2O = an N-acylsphing-4-enine + D-galactose. The catalysed reaction is cholesteryl 3-beta-D-glucoside + H2O = cholesterol + D-glucose. The enzyme catalyses a beta-D-glucosyl-(1&lt;-&gt;1')-N-acylsphing-4-enine + cholesterol = cholesteryl 3-beta-D-glucoside + an N-acylsphing-4-enine. It catalyses the reaction beta-D-glucosyl-N-(9Z-octadecenoyl)-sphing-4E-enine + cholesterol = N-(9Z-octadecenoyl)-sphing-4-enine + cholesteryl 3-beta-D-glucoside. It carries out the reaction beta-D-glucosyl-N-octanoylsphing-4E-enine + cholesterol = N-octanoylsphing-4-enine + cholesteryl 3-beta-D-glucoside. The catalysed reaction is beta-D-glucosyl-N-dodecanoylsphing-4-enine + cholesterol = N-dodecanoylsphing-4-enine + cholesteryl 3-beta-D-glucoside. The enzyme catalyses beta-D-glucosyl-(1&lt;-&gt;1)-N-octadecanoylsphing-4-enine + cholesterol = N-octadecanoylsphing-4-enine + cholesteryl 3-beta-D-glucoside. It catalyses the reaction beta-D-glucosyl-(1&lt;-&gt;1')-N-(15Z-tetracosenoyl)-sphing-4-enine + cholesterol = N-(15Z-tetracosenoyl)-sphing-4-enine + cholesteryl 3-beta-D-glucoside. It carries out the reaction a beta-D-galactosyl-(1&lt;-&gt;1')-N-acylsphing-4-enine + cholesterol = cholesteryl 3-beta-D-galactoside + an N-acylsphing-4-enine. The catalysed reaction is 1-(beta-D-galactosyl)-N-dodecanoylsphing-4-enine + cholesterol = cholesteryl 3-beta-D-galactoside + N-dodecanoylsphing-4-enine. The enzyme catalyses a beta-D-xylosyl-(1&lt;-&gt;1')-N-acylsphing-4-enine + cholesterol = cholesteryl 3-beta-D-xyloside + an N-acylsphing-4-enine. It catalyses the reaction beta-D-xylosyl-(1&lt;-&gt;1')-N-(9Z-octadecenoyl)-sphing-4-enine + cholesterol = cholesteryl 3-beta-D-xyloside + N-(9Z-octadecenoyl)-sphing-4-enine. It functions in the pathway steroid metabolism; cholesterol metabolism. The protein operates within sphingolipid metabolism. Glucosylceramidase that catalyzes, within the lysosomal compartment, the hydrolysis of glucosylceramides/GlcCers (such as beta-D-glucosyl-(1&lt;-&gt;1')-N-acylsphing-4-enine) into free ceramides (such as N-acylsphing-4-enine) and glucose. Plays a central role in the degradation of complex lipids and the turnover of cellular membranes. Through the production of ceramides, participates in the PKC-activated salvage pathway of ceramide formation. Catalyzes the glucosylation of cholesterol, through a transglucosylation reaction where glucose is transferred from GlcCer to cholesterol. GlcCer containing mono-unsaturated fatty acids (such as beta-D-glucosyl-N-(9Z-octadecenoyl)-sphing-4-enine) are preferred as glucose donors for cholesterol glucosylation when compared with GlcCer containing same chain length of saturated fatty acids (such as beta-D-glucosyl-N-octadecanoyl-sphing-4-enine). Under specific conditions, may alternatively catalyze the reverse reaction, transferring glucose from cholesteryl 3-beta-D-glucoside to ceramide. Can also hydrolyze cholesteryl 3-beta-D-glucoside producing glucose and cholesterol. Catalyzes the hydrolysis of galactosylceramides/GalCers (such as beta-D-galactosyl-(1&lt;-&gt;1')-N-acylsphing-4-enine), as well as the transfer of galactose between GalCers and cholesterol in vitro, but with lower activity than with GlcCers. Contrary to GlcCer and GalCer, xylosylceramide/XylCer (such as beta-D-xyosyl-(1&lt;-&gt;1')-N-acylsphing-4-enine) is not a good substrate for hydrolysis, however it is a good xylose donor for transxylosylation activity to form cholesteryl 3-beta-D-xyloside. The protein is Lysosomal acid glucosylceramidase (GBA1) of Pan troglodytes (Chimpanzee).